The following is a 504-amino-acid chain: Cytochrome P450 71B4 (504 aa).

Residues 1–21 traverse the membrane as a helical segment; that stretch reads MVSLLSFFLLLLVPIFFLLIF. Position 446 (cysteine 446) interacts with heme.

The protein belongs to the cytochrome P450 family. Heme is required as a cofactor.

It localises to the membrane. This chain is Cytochrome P450 71B4 (CYP71B4), found in Arabidopsis thaliana (Mouse-ear cress).